Reading from the N-terminus, the 437-residue chain is MEILMKSGDLNKYDLVKNALVLVLAGGRGSRLHELTDKRAKPALYFGGNRRIIDFALSNCINSDLNRIGVVTQYAAHSLLLHLQTGWSFLPQERGEFVDMLPARQQIDDSTWYRGTADAVYQNMAIIKNHYRPKYILILAGDHIYKQDYSVMLMDHVNSGAKCTVGCIEVPRSEAHEFGVMAVNENLKVKAFVEKPKDPPAMVGKPDVSLASMGIYVFDADYLYKMLEQEVNTPQTSHDFGKDVLPKCLEEGALYAHPFSRSCMGRNTEGEIYWRDVGTLDSFWQSNIDLVSENPQLDIYDQSWPIRGNPIQAYPSKFFYKHSNVHPVDNSLIGGGCVITDASISNSVLFDHIKIDAFSKVDHCVVLPQVKIGKNCVLKNCIIDRECEIPDGMQIGVDMEEDKKRFRISSTGKVILVTSKMLKILEGHEIGEEGHLD.

Alpha-D-glucose 1-phosphate is bound by residues tyrosine 113, glycine 179, 194-195, and serine 212; that span reads EK.

Belongs to the bacterial/plant glucose-1-phosphate adenylyltransferase family. As to quaternary structure, homotetramer.

It catalyses the reaction alpha-D-glucose 1-phosphate + ATP + H(+) = ADP-alpha-D-glucose + diphosphate. It functions in the pathway glycan biosynthesis; glycogen biosynthesis. In terms of biological role, involved in the biosynthesis of ADP-glucose, a building block required for the elongation reactions to produce glycogen. Catalyzes the reaction between ATP and alpha-D-glucose 1-phosphate (G1P) to produce pyrophosphate and ADP-Glc. The sequence is that of Glucose-1-phosphate adenylyltransferase from Haemophilus influenzae (strain ATCC 51907 / DSM 11121 / KW20 / Rd).